The primary structure comprises 134 residues: Zinc finger protein 593 (134 aa).

Residues M1 to R25 are compositionally biased toward basic residues. 2 disordered regions span residues M1 to G57 and S82 to T134. The segment covering P26–R36 has biased composition (basic and acidic residues). The segment at H61–H85 adopts a C2H2-type zinc-finger fold.

It belongs to the ZNF593/BUD20 C2H2-type zinc-finger protein family. As to quaternary structure, associates with pre-60S ribosomal particles. As to expression, ubiquitous. Detected in spleen, prostate, testis, small intestine, colon and to a minor level in thymus and peripheral blood leukocytes.

It is found in the nucleus. The protein resides in the nucleolus. It localises to the cytoplasm. Functionally, involved in pre-60S ribosomal particles maturation by promoting the nuclear export of the 60S ribosome. Negatively modulates the DNA binding activity of Oct-2 and therefore its transcriptional regulatory activity. In Homo sapiens (Human), this protein is Zinc finger protein 593 (ZNF593).